The following is a 156-amino-acid chain: Small ribosomal subunit protein uS7 (156 aa).

The protein belongs to the universal ribosomal protein uS7 family. Part of the 30S ribosomal subunit. Contacts proteins S9 and S11.

Its function is as follows. One of the primary rRNA binding proteins, it binds directly to 16S rRNA where it nucleates assembly of the head domain of the 30S subunit. Is located at the subunit interface close to the decoding center, probably blocks exit of the E-site tRNA. The chain is Small ribosomal subunit protein uS7 from Shewanella sp. (strain W3-18-1).